The following is a 196-amino-acid chain: Large ribosomal subunit protein uL14my (196 aa).

The N-terminal 62 residues, 1–62 (MATALASKLS…TILKCVDNSC (62 aa)), are a transit peptide targeting the mitochondrion. The disordered stretch occupies residues 148-175 (EKKGQNNSHGSKRKMEYNQPTGTRVFGP).

It belongs to the universal ribosomal protein uL14 family. Part of the mitochondrial 50S ribosomal subunit. In terms of tissue distribution, mostly expressed in pistils and inflorescences, including floral organs and meristems, and, to a lower extent, in leaves.

It is found in the mitochondrion. Binds to 23S rRNA in mitochondrion. Required for the formation of the proximal region of the ovule primordium during floral organogenesis, thus participating in patterning and growth of ovule. Also regulates the initiation and/or maintenance of integument and embryo sac ontogenesis. Prevents inappropriate cell death in the young ovule. This is Large ribosomal subunit protein uL14my (HLL) from Arabidopsis thaliana (Mouse-ear cress).